Consider the following 638-residue polypeptide: LIM domain kinase 2 (638 aa).

2 LIM zinc-binding domains span residues 12–63 and 72–124; these read CPGC…CPKD and CHGC…CGKC. The region spanning 152–239 is the PDZ domain; that stretch reads LISMPATTEG…TLQLLIEHDP (88 aa). Thr210 carries the post-translational modification Phosphothreonine. Residues 279-304 form a disordered region; the sequence is LRRRSLRRSNSISKSPGPSSPKEPLL. The segment covering 286–302 has biased composition (low complexity); it reads RSNSISKSPGPSSPKEP. Residues Ser293 and Ser298 each carry the phosphoserine modification. The Protein kinase domain maps to 331 to 608; it reads LIHGEVLGKG…DSFEALSLYL (278 aa). Residues 337–345 and Lys360 each bind ATP; that span reads LGKGFFGQA. Asp451 is a catalytic residue. At Thr505 the chain carries Phosphothreonine; by ROCK1 and CDC42BP.

Belongs to the protein kinase superfamily. TKL Ser/Thr protein kinase family. In terms of assembly, interacts with LIMK2b. Interacts with LIMK2a. As to quaternary structure, binds ROCK1 and MARF1. Interacts with NISCH. Post-translationally, phosphorylated on serine and/or threonine residues by ROCK1.

Its subcellular location is the cytoplasm. The protein resides in the cytoskeleton. The protein localises to the spindle. It is found in the microtubule organizing center. It localises to the centrosome. Its subcellular location is the nucleus. The protein resides in the perinuclear region. The enzyme catalyses L-seryl-[protein] + ATP = O-phospho-L-seryl-[protein] + ADP + H(+). It carries out the reaction L-threonyl-[protein] + ATP = O-phospho-L-threonyl-[protein] + ADP + H(+). In terms of biological role, serine/threonine-protein kinase that plays an essential role in the regulation of actin filament dynamics. Acts downstream of several Rho family GTPase signal transduction pathways. Involved in astral microtubule organization and mitotic spindle orientation during early stages of mitosis by mediating phosphorylation of TPPP. Displays serine/threonine-specific phosphorylation of myelin basic protein and histone (MBP) in vitro. Suppresses ciliogenesis via multiple pathways; phosphorylation of CFL1, suppression of directional trafficking of ciliary vesicles to the ciliary base, and by facilitating YAP1 nuclear localization where it acts as a transcriptional corepressor of the TEAD4 target genes AURKA and PLK1. In Homo sapiens (Human), this protein is LIM domain kinase 2 (LIMK2).